Here is a 361-residue protein sequence, read N- to C-terminus: Phospho-N-acetylmuramoyl-pentapeptide-transferase (361 aa).

Transmembrane regions (helical) follow at residues 28–48, 73–93, 97–117, 134–154, 168–188, 200–220, 237–257, 264–284, 289–309, and 338–358; these read LAAL…IRSL, TMGG…WADL, YIWL…VDDY, FFWQ…TAEL, VAIP…IVGS, GLAI…AYVA, AGEL…FLWF, VFMG…ITVI, IVLV…MIQV, and QVVV…LSTL.

This sequence belongs to the glycosyltransferase 4 family. MraY subfamily. Mg(2+) is required as a cofactor.

Its subcellular location is the cell inner membrane. The catalysed reaction is UDP-N-acetyl-alpha-D-muramoyl-L-alanyl-gamma-D-glutamyl-meso-2,6-diaminopimeloyl-D-alanyl-D-alanine + di-trans,octa-cis-undecaprenyl phosphate = di-trans,octa-cis-undecaprenyl diphospho-N-acetyl-alpha-D-muramoyl-L-alanyl-D-glutamyl-meso-2,6-diaminopimeloyl-D-alanyl-D-alanine + UMP. It functions in the pathway cell wall biogenesis; peptidoglycan biosynthesis. Catalyzes the initial step of the lipid cycle reactions in the biosynthesis of the cell wall peptidoglycan: transfers peptidoglycan precursor phospho-MurNAc-pentapeptide from UDP-MurNAc-pentapeptide onto the lipid carrier undecaprenyl phosphate, yielding undecaprenyl-pyrophosphoryl-MurNAc-pentapeptide, known as lipid I. This is Phospho-N-acetylmuramoyl-pentapeptide-transferase from Nitrosomonas eutropha (strain DSM 101675 / C91 / Nm57).